The sequence spans 345 residues: Proto-oncogene serine/threonine-protein kinase mos (345 aa).

Positions Val-63–Leu-344 constitute a Protein kinase domain. Residues Leu-69–Val-77 and Lys-90 contribute to the ATP site. Asp-202 acts as the Proton acceptor in catalysis.

Belongs to the protein kinase superfamily. Ser/Thr protein kinase family. In terms of assembly, interacts with MAP2K1/MEK1. In terms of tissue distribution, restricted to gonadal tissues.

The protein localises to the cytoplasm. The catalysed reaction is L-seryl-[protein] + ATP = O-phospho-L-seryl-[protein] + ADP + H(+). The enzyme catalyses L-threonyl-[protein] + ATP = O-phospho-L-threonyl-[protein] + ADP + H(+). Its function is as follows. Serine/threonine kinase involved in the regulation of MAPK signaling. Is an activator of the ERK1/2 signaling cascade playing an essential role in the stimulation of oocyte maturation. This chain is Proto-oncogene serine/threonine-protein kinase mos, found in Sus scrofa (Pig).